Consider the following 294-residue polypeptide: ATP synthase gamma chain (294 aa).

Belongs to the ATPase gamma chain family. As to quaternary structure, F-type ATPases have 2 components, CF(1) - the catalytic core - and CF(0) - the membrane proton channel. CF(1) has five subunits: alpha(3), beta(3), gamma(1), delta(1), epsilon(1). CF(0) has three main subunits: a, b and c.

The protein localises to the cell inner membrane. Produces ATP from ADP in the presence of a proton gradient across the membrane. The gamma chain is believed to be important in regulating ATPase activity and the flow of protons through the CF(0) complex. This Campylobacter jejuni (strain RM1221) protein is ATP synthase gamma chain.